Consider the following 123-residue polypeptide: Small ribosomal subunit protein uS12 (123 aa).

Residues 1-23 (MPTISQLVKKGREKVEKKTKSPA) form a disordered region. Residue Asp89 is modified to 3-methylthioaspartic acid.

This sequence belongs to the universal ribosomal protein uS12 family. Part of the 30S ribosomal subunit. Contacts proteins S8 and S17. May interact with IF1 in the 30S initiation complex.

Its function is as follows. With S4 and S5 plays an important role in translational accuracy. Functionally, interacts with and stabilizes bases of the 16S rRNA that are involved in tRNA selection in the A site and with the mRNA backbone. Located at the interface of the 30S and 50S subunits, it traverses the body of the 30S subunit contacting proteins on the other side and probably holding the rRNA structure together. The combined cluster of proteins S8, S12 and S17 appears to hold together the shoulder and platform of the 30S subunit. This is Small ribosomal subunit protein uS12 from Thermodesulfovibrio yellowstonii (strain ATCC 51303 / DSM 11347 / YP87).